The primary structure comprises 264 residues: tRNA pseudouridine synthase A (264 aa).

The active-site Nucleophile is D51. Y109 serves as a coordination point for substrate.

It belongs to the tRNA pseudouridine synthase TruA family. Homodimer.

It carries out the reaction uridine(38/39/40) in tRNA = pseudouridine(38/39/40) in tRNA. Functionally, formation of pseudouridine at positions 38, 39 and 40 in the anticodon stem and loop of transfer RNAs. In Vibrio atlanticus (strain LGP32) (Vibrio splendidus (strain Mel32)), this protein is tRNA pseudouridine synthase A.